The chain runs to 124 residues: Small ribosomal subunit protein uS12 (124 aa).

The residue at position 89 (Asp89) is a 3-methylthioaspartic acid.

Belongs to the universal ribosomal protein uS12 family. Part of the 30S ribosomal subunit. Contacts proteins S8 and S17. May interact with IF1 in the 30S initiation complex.

With S4 and S5 plays an important role in translational accuracy. Functionally, interacts with and stabilizes bases of the 16S rRNA that are involved in tRNA selection in the A site and with the mRNA backbone. Located at the interface of the 30S and 50S subunits, it traverses the body of the 30S subunit contacting proteins on the other side and probably holding the rRNA structure together. The combined cluster of proteins S8, S12 and S17 appears to hold together the shoulder and platform of the 30S subunit. The chain is Small ribosomal subunit protein uS12 from Erwinia tasmaniensis (strain DSM 17950 / CFBP 7177 / CIP 109463 / NCPPB 4357 / Et1/99).